Here is a 251-residue protein sequence, read N- to C-terminus: ATP synthase subunit a, chloroplastic (251 aa).

Transmembrane regions (helical) follow at residues 3-23 (IVLLYYFVNMFISGIFQIANV), 38-58 (IHGQVLINSWIVILIIGFLSI), 99-119 (VPYIGTMFLFIFVSNWSGALI), 138-158 (INTTAGLAILTSLAYFYAGLN), 203-223 (LVVAVLVSLVPLIVPVPLIFL), and 224-244 (GLFTSGIQALIFATLSGSYIG).

This sequence belongs to the ATPase A chain family. In terms of assembly, F-type ATPases have 2 components, CF(1) - the catalytic core - and CF(0) - the membrane proton channel. CF(1) has five subunits: alpha(3), beta(3), gamma(1), delta(1), epsilon(1). CF(0) has four main subunits: a, b, b' and c.

The protein resides in the plastid. The protein localises to the chloroplast thylakoid membrane. Key component of the proton channel; it plays a direct role in the translocation of protons across the membrane. The sequence is that of ATP synthase subunit a, chloroplastic from Euglena gracilis.